Reading from the N-terminus, the 165-residue chain is UPF0303 protein ACP_1015 (165 aa).

It belongs to the UPF0303 family.

The chain is UPF0303 protein ACP_1015 from Acidobacterium capsulatum (strain ATCC 51196 / DSM 11244 / BCRC 80197 / JCM 7670 / NBRC 15755 / NCIMB 13165 / 161).